An 885-amino-acid polypeptide reads, in one-letter code: Cytosolic carboxypeptidase-like protein 5 (885 aa).

Residues 157–570 (YPFSYSDCQD…AMAIAALDMA (414 aa)) form the Peptidase M14 domain. Residues H252 and E255 each contribute to the Zn(2+) site. Positions 343-402 (NSQSPSEHQHSSHLPPDAPLSDPEKADSLQNRAHLGRSSSGDKPEAWTQTEVAEQKPNSV) are disordered. Positions 388–402 (AWTQTEVAEQKPNSV) are enriched in polar residues. Position 434 (H434) interacts with Zn(2+). E516 serves as the catalytic Proton donor/acceptor. Disordered stretches follow at residues 605–733 (TTVN…LASS) and 783–839 (RLQA…PRPC). Positions 620-640 (PPRSNNGLPVSCSENTLSRAR) are enriched in polar residues. Composition is skewed to low complexity over residues 641-666 (SFST…NSPS) and 714-733 (PTSS…LASS). The residue at position 840 (S840) is a Phosphoserine.

This sequence belongs to the peptidase M14 family. The cofactor is Zn(2+).

Its subcellular location is the cytoplasm. It localises to the cytosol. The protein localises to the nucleus. The protein resides in the cytoskeleton. It is found in the spindle. Its subcellular location is the midbody. The enzyme catalyses gamma-L-glutamyl-L-glutamyl-[protein] + H2O = L-glutamyl-[protein] + L-glutamate. It carries out the reaction (L-glutamyl)(n+1)-gamma-L-glutamyl-L-glutamyl-[protein] + H2O = (L-glutamyl)(n)-gamma-L-glutamyl-L-glutamyl-[protein] + L-glutamate. It catalyses the reaction C-terminal L-alpha-aminoacyl-L-glutamyl-[tubulin] + H2O = C-terminal L-alpha-aminoacyl-[tubulin] + L-glutamate. The catalysed reaction is C-terminal L-alpha-aminoacyl-L-glutamyl-L-glutamyl-[tubulin] + H2O = C-terminal L-alpha-aminoacyl-L-glutamyl-[tubulin] + L-glutamate. Functionally, metallocarboxypeptidase that mediates deglutamylation of tubulin and non-tubulin target proteins. Catalyzes the removal of polyglutamate side chains present on the gamma-carboxyl group of glutamate residues within the C-terminal tail of alpha- and beta-tubulin. Cleaves alpha- and gamma-linked polyglutamate tubulin side-chain, as well as the branching point glutamate. Also catalyzes the removal of alpha-linked glutamate residues from the carboxy-terminus of alpha-tubulin. Mediates deglutamylation of nucleotidyltransferase CGAS, leading to CGAS antiviral defense response activation. The polypeptide is Cytosolic carboxypeptidase-like protein 5 (AGBL5) (Bos taurus (Bovine)).